Consider the following 106-residue polypeptide: ATP-dependent Clp protease adapter protein ClpS (106 aa).

Residues 1–22 (MTDEPNQDDPQGPEVEAAKPSL) form a disordered region.

Belongs to the ClpS family. In terms of assembly, binds to the N-terminal domain of the chaperone ClpA.

Its function is as follows. Involved in the modulation of the specificity of the ClpAP-mediated ATP-dependent protein degradation. The sequence is that of ATP-dependent Clp protease adapter protein ClpS from Halorhodospira halophila (strain DSM 244 / SL1) (Ectothiorhodospira halophila (strain DSM 244 / SL1)).